We begin with the raw amino-acid sequence, 60 residues long: MKSVILLFAVIAIIVAVIIPAINGESSSNPSANAGIMESLKQLSAKAEELIKKLLAKKAK.

The signal sequence occupies residues M1–G24. Positions E25–A34 are excised as a propeptide.

This sequence belongs to the formicidae venom precursor-01 superfamily. Expressed by the venom gland.

The protein localises to the secreted. Functionally, induces paralysis 5 minutes after injection into blowflies (L.caesar), and then death within 24 hours. May have antimicrobial properties, like most ant linear peptides. This Manica rubida (European giant red ant) protein is U20-myrmicitoxin-Mri1a.